The primary structure comprises 203 residues: Large ribosomal subunit protein bL25 (203 aa).

This sequence belongs to the bacterial ribosomal protein bL25 family. CTC subfamily. As to quaternary structure, part of the 50S ribosomal subunit; part of the 5S rRNA/L5/L18/L25 subcomplex. Contacts the 5S rRNA. Binds to the 5S rRNA independently of L5 and L18.

This is one of the proteins that binds to the 5S RNA in the ribosome where it forms part of the central protuberance. The sequence is that of Large ribosomal subunit protein bL25 from Wolbachia pipientis subsp. Culex pipiens (strain wPip).